Here is a 405-residue protein sequence, read N- to C-terminus: Envelope glycoprotein M (405 aa).

At 1-17 (MKSSKNDTFVYRTWVKT) the chain is on the intravirion side. A helical transmembrane segment spans residues 18–38 (LVVYFVMFVMSAVVPITAMFP). The Virion surface segment spans residues 39-76 (NLGYPCYFNALVDYGALNLTNYNLAHHLTPTLYLEPPE). The helical transmembrane segment at 77 to 97 (MFVYITLVFIADCVAFIYYAC) threads the bilayer. Residues 98 to 121 (GEVALIKARKKVSGLTDLSAWVSA) lie on the Intravirion side of the membrane. The chain crosses the membrane as a helical span at residues 122 to 142 (VGSPTVLFLAILKLWSIQVFI). Over 143–149 (QVLSYKH) the chain is Virion surface. Residues 150-170 (VFLSAFVYFLHFLASVLHACA) form a helical membrane-spanning segment. At 171 to 192 (CVTRFSPVWVVKAQDNSIPQDT) the chain is on the intravirion side. A helical membrane pass occupies residues 193–215 (FLWWVVFYLKPVVTNLYLGCLAL). The Virion surface portion of the chain corresponds to 216–245 (ETLVFSLSVFLALGNSFYFMVGDMVLGAVN). A helical membrane pass occupies residues 246 to 266 (LFLILPIFWYILTEVWLASFL). Position 267 (Arg267) is a topological domain, intravirion. The chain crosses the membrane as a helical span at residues 268 to 288 (HNFGFYCGMFIASIILILPLV). Residues 289–299 (RYEAVFVSAKL) lie on the Virion surface side of the membrane. Residues 300–320 (HTTVAINVAIIPILCSVAMLI) traverse the membrane as a helical segment. Topologically, residues 321 to 405 (RICRIFKSMR…TTDSEEEIFP (85 aa)) are intravirion. Residues 346 to 405 (LESEPRPRPSRTPSPGRNRRRSSTSSSSSRSTRRQRPVSTQALVSSVLPMTTDSEEEIFP) form a disordered region. Residues 386 to 397 (QALVSSVLPMTT) are compositionally biased toward polar residues.

The protein belongs to the herpesviridae glycoprotein M family. As to quaternary structure, interacts (via N-terminus) with gN (via N-terminus). The gM-gN heterodimer forms the gCII complex.

The protein resides in the virion membrane. It is found in the host Golgi apparatus. The protein localises to the host trans-Golgi network. Its subcellular location is the host endosome membrane. It localises to the host nucleus inner membrane. Functionally, envelope glycoprotein important for virion assembly and egress. Plays a role in the correct incorporation of gH-gL into virion membrane. Directs the glycoprotein N (gN) to the host trans-Golgi network. The polypeptide is Envelope glycoprotein M (Epstein-Barr virus (strain B95-8) (HHV-4)).